Reading from the N-terminus, the 121-residue chain is Large ribosomal subunit protein uL22 (121 aa).

The protein belongs to the universal ribosomal protein uL22 family. Part of the 50S ribosomal subunit.

Its function is as follows. This protein binds specifically to 23S rRNA; its binding is stimulated by other ribosomal proteins, e.g. L4, L17, and L20. It is important during the early stages of 50S assembly. It makes multiple contacts with different domains of the 23S rRNA in the assembled 50S subunit and ribosome. Functionally, the globular domain of the protein is located near the polypeptide exit tunnel on the outside of the subunit, while an extended beta-hairpin is found that lines the wall of the exit tunnel in the center of the 70S ribosome. The protein is Large ribosomal subunit protein uL22 of Arthrobacter sp. (strain FB24).